The following is a 557-amino-acid chain: Neurofilament light polypeptide (557 aa).

Ser2 carries the N-acetylserine modification. The segment at 2–89 (SSYSYDPYYT…KIVRTQEKAQ (88 aa)) is head. The IF rod domain maps to 86 to 396 (EKAQLQDLND…KLLEGEETRL (311 aa)). The coil 1A stretch occupies residues 90–121 (LQDLNDRFANFIERVHELEQRNKVLEAELLLL). A linker 1 region spans residues 122 to 134 (RQKHNEPSRLRDL). Residues 135 to 230 (YEQEVRELRL…KVHEEELAQL (96 aa)) are coil 1B. The linker 12 stretch occupies residues 231 to 248 (QSQVQYAQISLEVEVAKP). The coil 2A stretch occupies residues 249–267 (DLSSALRDIRAQYEKLAAK). The linker 2 stretch occupies residues 268-276 (NMQSAEDWF). Residues 277 to 392 (KSRFTVLTQS…AAYRKLLEGE (116 aa)) are coil 2B. Residues 393–437 (ETRLSFSGVGAITSGYTQSAPVFGRSAYSLQSSSYMTSRAFPTYY) form a tail, subdomain A region. The interval 393–557 (ETRLSFSGVG…KKKKKKKKKK (165 aa)) is tail. The segment at 438–557 (SSHVQEEQLD…KKKKKKKKKK (120 aa)) is tail, subdomain B (acidic). Residues 452-557 (IESSRAEEAK…KKKKKKKKKK (106 aa)) are disordered. The segment covering 453 to 464 (ESSRAEEAKAEA) has biased composition (basic and acidic residues). Positions 465–538 (PEEEEEEAGE…GEGEEEEEGK (74 aa)) are enriched in acidic residues. Residues 539-548 (GEEPAEEESK) show a composition bias toward basic and acidic residues.

Belongs to the intermediate filament family. Forms homodimers (in vitro).

It is found in the cell projection. Its subcellular location is the axon. It localises to the cytoplasm. The protein localises to the cytoskeleton. In terms of biological role, neurofilaments usually contain three intermediate filament proteins: NEFL, NEFM, and NEFH which are involved in the maintenance of neuronal caliber. May additionally cooperate with other neuronal intermediate filament proteins to form neuronal filamentous networks. In Xenopus tropicalis (Western clawed frog), this protein is Neurofilament light polypeptide (nefl).